We begin with the raw amino-acid sequence, 712 residues long: Aryl hydrocarbon receptor nuclear translocator 2 (712 aa).

Disordered regions lie at residues 1–20 and 35–74; these read MATP…PGSV and MAGA…IERR. Arg-42 bears the Omega-N-methylarginine mark. The segment covering 63–73 has biased composition (basic and acidic residues); sequence FSRENHSEIER. Residues 63–116 enclose the bHLH domain; the sequence is FSRENHSEIERRRRNKMTQYITELSDMVPTCSALARKPDKLTILRMAVSHMKSM. 2 PAS domains span residues 134-209 and 323-393; these read TEQE…MTGR and PVCM…VKLK. The region spanning 398-441 is the PAC domain; the sequence is SVMYRFRTKNREWLLIRTSSFTFQNPYSDEIEYVICTNTNVKQL. The interval 573 to 712 is disordered; the sequence is AWTGSRPPFP…DLGMFPPFSE (140 aa). 2 stretches are compositionally biased toward low complexity: residues 597–626 and 653–675; these read SSHP…AYPS and SQWQ…QPGQ.

Efficient DNA binding requires dimerization with another bHLH protein. Heterodimer with NPAS4 or SIM1. Heterodimer with the aryl hydrocarbon receptor (AHR) or the SIM1 protein. Interacts with TACC3.

It is found in the nucleus. Functionally, transcription factor that plays a role in the development of the hypothalamo-pituitary axis, postnatal brain growth, and visual and renal function. Specifically recognizes the xenobiotic response element (XRE). This chain is Aryl hydrocarbon receptor nuclear translocator 2 (Arnt2), found in Rattus norvegicus (Rat).